The sequence spans 465 residues: Soluble pyridine nucleotide transhydrogenase (465 aa).

Residue 36-45 (ERYNNVGGGC) participates in FAD binding.

This sequence belongs to the class-I pyridine nucleotide-disulfide oxidoreductase family. The cofactor is FAD.

It localises to the cytoplasm. The enzyme catalyses NAD(+) + NADPH = NADH + NADP(+). In terms of biological role, conversion of NADPH, generated by peripheral catabolic pathways, to NADH, which can enter the respiratory chain for energy generation. This chain is Soluble pyridine nucleotide transhydrogenase, found in Serratia proteamaculans (strain 568).